The following is a 141-amino-acid chain: Large ribosomal subunit protein uL11 (141 aa).

The protein belongs to the universal ribosomal protein uL11 family. In terms of assembly, part of the ribosomal stalk of the 50S ribosomal subunit. Interacts with L10 and the large rRNA to form the base of the stalk. L10 forms an elongated spine to which L12 dimers bind in a sequential fashion forming a multimeric L10(L12)X complex. Post-translationally, one or more lysine residues are methylated.

In terms of biological role, forms part of the ribosomal stalk which helps the ribosome interact with GTP-bound translation factors. The chain is Large ribosomal subunit protein uL11 from Pelodictyon phaeoclathratiforme (strain DSM 5477 / BU-1).